A 251-amino-acid polypeptide reads, in one-letter code: Maleate isomerase (251 aa).

Substrate is bound by residues Asn14, 76–78 (CLV), Tyr133, and Asn163. The active-site Nucleophile is the Cys76. Position 76 is an S-(2-succinyl)cysteine (Cys76). Residue Cys194 is the Proton donor of the active site. A substrate-binding site is contributed by 195 to 196 (VQ).

Belongs to the maleate isomerase family. In terms of assembly, homodimer.

It catalyses the reaction maleate = fumarate. In terms of biological role, catalyzes cis-trans isomerization of the C2-C3 double bond in maleate to yield fumarate. Shows a strict specificity for maleate, with no activity detected toward structurally related substrates including citraconate, mesaconate, dimethylmaleate, and maleamide. The polypeptide is Maleate isomerase (Nocardia farcinica (strain IFM 10152)).